The chain runs to 210 residues: Inner membrane-spanning protein YciB (210 aa).

6 consecutive transmembrane segments (helical) span residues 12–32 (EVSP…FFFA), 53–73 (IFIA…VSWM), 78–98 (LPMM…LTLW), 115–135 (LFGA…GYVF), 153–173 (WGVF…SFST), and 175–195 (FWVA…TLAQ).

It belongs to the YciB family.

The protein localises to the cell inner membrane. Functionally, plays a role in cell envelope biogenesis, maintenance of cell envelope integrity and membrane homeostasis. The protein is Inner membrane-spanning protein YciB of Sinorhizobium medicae (strain WSM419) (Ensifer medicae).